Consider the following 145-residue polypeptide: Enhancer of mRNA-decapping protein 2 (145 aa).

Disordered regions lie at residues 1–74 (MGSE…DKAT) and 89–115 (PKKKSCKYKKKKTRQYQDRAAASIDSK). The span at 29–42 (TKTQILVPPTQSLP) shows a compositional bias: polar residues. The span at 55–73 (QRREPRERTSKTGHEDDKA) shows a compositional bias: basic and acidic residues. Over residues 89 to 102 (PKKKSCKYKKKKTR) the composition is skewed to basic residues.

It belongs to the EDC family.

The protein localises to the cytoplasm. Its subcellular location is the nucleus. Functionally, mRNA-binding protein which stimulates mRNA decapping by DCP1 and DCP2. The chain is Enhancer of mRNA-decapping protein 2 (EDC2) from Saccharomyces cerevisiae (strain ATCC 204508 / S288c) (Baker's yeast).